A 326-amino-acid chain; its full sequence is Beta-ketoacyl-[acyl-carrier-protein] synthase III (326 aa).

Residues Cys-111 and His-252 contribute to the active site. Residues Gln-253–Arg-257 are ACP-binding. Residue Asn-282 is part of the active site.

This sequence belongs to the thiolase-like superfamily. FabH family. In terms of assembly, homodimer.

It localises to the plastid. The protein localises to the chloroplast. The catalysed reaction is malonyl-[ACP] + acetyl-CoA + H(+) = 3-oxobutanoyl-[ACP] + CO2 + CoA. Its pathway is lipid metabolism; fatty acid biosynthesis. In terms of biological role, catalyzes the condensation reaction of fatty acid synthesis by the addition to an acyl acceptor of two carbons from malonyl-ACP. Catalyzes the first condensation reaction which initiates fatty acid synthesis and may therefore play a role in governing the total rate of fatty acid production. Possesses both acetoacetyl-ACP synthase and acetyl transacylase activities. Its substrate specificity determines the biosynthesis of branched-chain and/or straight-chain of fatty acids. The sequence is that of Beta-ketoacyl-[acyl-carrier-protein] synthase III from Porphyra umbilicalis (Purple laver).